The primary structure comprises 277 residues: Undecaprenyl-diphosphatase (277 aa).

The next 7 helical transmembrane spans lie at 3–23 (IALL…EFLP), 44–64 (AKVF…LVYW), 82–102 (QFAL…LLFG), 109–129 (LFTP…ILWA), 189–209 (TDFS…YSLF), 218–238 (ADAP…WLCI), and 253–273 (FAWY…SGVV).

It belongs to the UppP family.

The protein localises to the cell inner membrane. It carries out the reaction di-trans,octa-cis-undecaprenyl diphosphate + H2O = di-trans,octa-cis-undecaprenyl phosphate + phosphate + H(+). In terms of biological role, catalyzes the dephosphorylation of undecaprenyl diphosphate (UPP). Confers resistance to bacitracin. This chain is Undecaprenyl-diphosphatase, found in Polaromonas naphthalenivorans (strain CJ2).